The sequence spans 438 residues: Ribosomal protein uS12 methylthiotransferase RimO (438 aa).

The region spanning 1–115 (MKYFILSLGC…LDKLLADLGE (115 aa)) is the MTTase N-terminal domain. [4Fe-4S] cluster-binding residues include cysteine 10, cysteine 46, cysteine 78, cysteine 150, cysteine 154, and cysteine 157. Residues 136–366 (KSNEVYRYIK…MEVQQEISLN (231 aa)) enclose the Radical SAM core domain. The region spanning 369–437 (KALVGKKIPV…IYDLKGEFIN (69 aa)) is the TRAM domain.

Belongs to the methylthiotransferase family. RimO subfamily. [4Fe-4S] cluster is required as a cofactor.

Its subcellular location is the cytoplasm. The enzyme catalyses L-aspartate(89)-[ribosomal protein uS12]-hydrogen + (sulfur carrier)-SH + AH2 + 2 S-adenosyl-L-methionine = 3-methylsulfanyl-L-aspartate(89)-[ribosomal protein uS12]-hydrogen + (sulfur carrier)-H + 5'-deoxyadenosine + L-methionine + A + S-adenosyl-L-homocysteine + 2 H(+). Catalyzes the methylthiolation of an aspartic acid residue of ribosomal protein uS12. The protein is Ribosomal protein uS12 methylthiotransferase RimO of Carboxydothermus hydrogenoformans (strain ATCC BAA-161 / DSM 6008 / Z-2901).